Here is a 203-residue protein sequence, read N- to C-terminus: E3 ubiquitin-protein ligase RNF152 (203 aa).

The RING-type zinc-finger motif lies at 12 to 55 (CQICFNYYSPRRRPKLLDCKHTCCSVCLQQMRTSQKDVRCPWCR). The necessary for interaction with RRAGA stretch occupies residues 106–165 (ISKERALLPGDMGCRLLPGSQQKSVTVVTVPAEQRPLQGGAPQEAVEEEPDRRGVAKSST). A helical membrane pass occupies residues 167 to 187 (SGVCTVILVACVLVFLLGIVL).

This sequence belongs to the RNF152 family. In terms of assembly, interacts with RRAGA (inactive GDP-bound form); stimulated by amino acid starvation. Post-translationally, ubiquitinated. Autoubiquitinated in vitro, leading to its degradation by the proteasome.

The protein resides in the lysosome membrane. It catalyses the reaction S-ubiquitinyl-[E2 ubiquitin-conjugating enzyme]-L-cysteine + [acceptor protein]-L-lysine = [E2 ubiquitin-conjugating enzyme]-L-cysteine + N(6)-ubiquitinyl-[acceptor protein]-L-lysine.. Its pathway is protein modification; protein ubiquitination. Functionally, E3 ubiquitin-protein ligase that acts as a negative regulator of mTORC1 signaling by mediating ubiquitination of RagA/RRAGA and RHEB. Catalyzes 'Lys-63'-linked polyubiquitination of RagA/RRAGA in response to amino acid starvation, thereby regulating mTORC1 signaling. Also mediates monoubiquitination of RHEB, promoting its association with the TSC-TBC complex and subsequent inhibition. Also mediates 'Lys-48'-linked polyubiquitination of target proteins and their subsequent targeting to the proteasome for degradation. Induces apoptosis when overexpressed. The polypeptide is E3 ubiquitin-protein ligase RNF152 (Ailuropoda melanoleuca (Giant panda)).